Consider the following 78-residue polypeptide: Keratin-associated protein 6-5 (78 aa).

The 25 X 2 AA repeats of G-[YCGS] stretch occupies residues 3-76 (GYYGNYYGGR…GSGYGSGFGY (74 aa)).

It belongs to the KRTAP type 6 family. Interacts with hair keratins. In terms of tissue distribution, strong expression in narrowly defined pattern restricted to the lower and middle cortical regions of the hair shaft in both developing and cycling hair. During hair follicle regression (catagen), expression levels decrease until expression is no longer detectable in follicles at resting stage (telogen).

In terms of biological role, in the hair cortex, hair keratin intermediate filaments are embedded in an interfilamentous matrix, consisting of hair keratin-associated proteins (KRTAP), which are essential for the formation of a rigid and resistant hair shaft through their extensive disulfide bond cross-linking with abundant cysteine residues of hair keratins. The matrix proteins include the high-sulfur and high-glycine-tyrosine keratins. This Mus musculus (Mouse) protein is Keratin-associated protein 6-5 (Krtap6-5).